A 270-amino-acid polypeptide reads, in one-letter code: MTLKIGIVGAGGRMGRQLIQAVYHTEGVELGAAFERVGSSLVGTDAGELAGVGKLGIKVSDNLTQEKDNFDLLVDFTRPEGTLQHLAFCVEHHKNIVIGTTGFDDQSKQAIQQAAQNIAIVFASNYSVGVNLVFKLLKKAAKVMGDYCDIEIIEAHHRHKVDAPSGTALSMGEHIAKTLGRDLKTHGVFSREGITGERKPDEIGFSTIRAADVVGEHTVWFADIGERVEISHKASSRMTFANGAVRAAKWLSTKQEGLFDMTDVLDLNNL.

Residues 9–14 (GAGGRM) and E35 each bind NAD(+). NADP(+) is bound at residue R36. Residues 99 to 101 (GTT) and 123 to 126 (ASNY) contribute to the NAD(+) site. The Proton donor/acceptor role is filled by H156. Position 157 (H157) interacts with (S)-2,3,4,5-tetrahydrodipicolinate. K160 acts as the Proton donor in catalysis. 166-167 (GT) is a binding site for (S)-2,3,4,5-tetrahydrodipicolinate.

The protein belongs to the DapB family.

It is found in the cytoplasm. It catalyses the reaction (S)-2,3,4,5-tetrahydrodipicolinate + NAD(+) + H2O = (2S,4S)-4-hydroxy-2,3,4,5-tetrahydrodipicolinate + NADH + H(+). The enzyme catalyses (S)-2,3,4,5-tetrahydrodipicolinate + NADP(+) + H2O = (2S,4S)-4-hydroxy-2,3,4,5-tetrahydrodipicolinate + NADPH + H(+). Its pathway is amino-acid biosynthesis; L-lysine biosynthesis via DAP pathway; (S)-tetrahydrodipicolinate from L-aspartate: step 4/4. Catalyzes the conversion of 4-hydroxy-tetrahydrodipicolinate (HTPA) to tetrahydrodipicolinate. The polypeptide is 4-hydroxy-tetrahydrodipicolinate reductase (Histophilus somni (strain 129Pt) (Haemophilus somnus)).